The chain runs to 376 residues: Adipocyte plasma membrane-associated protein (376 aa).

A helical transmembrane segment spans residues 1-17 (MTFLMLAVSLAIPLLGA). The N-linked (GlcNAc...) asparagine glycan is linked to Asn120.

This sequence belongs to the strictosidine synthase family.

Its subcellular location is the membrane. Its function is as follows. Exhibits strong arylesterase activity with beta-naphthyl acetate and phenyl acetate. May play a role in adipocyte differentiation. This is Adipocyte plasma membrane-associated protein (Apmap) from Rattus norvegicus (Rat).